The following is a 248-amino-acid chain: 2,3-bisphosphoglycerate-dependent phosphoglycerate mutase (248 aa).

Residues 8-15 (RHGESTWN), 21-22 (TG), Arg-60, 87-90 (ERHY), Lys-98, 114-115 (RR), and 183-184 (GN) contribute to the substrate site. His-9 functions as the Tele-phosphohistidine intermediate in the catalytic mechanism. Glu-87 functions as the Proton donor/acceptor in the catalytic mechanism.

This sequence belongs to the phosphoglycerate mutase family. BPG-dependent PGAM subfamily. Homodimer.

It catalyses the reaction (2R)-2-phosphoglycerate = (2R)-3-phosphoglycerate. Its pathway is carbohydrate degradation; glycolysis; pyruvate from D-glyceraldehyde 3-phosphate: step 3/5. In terms of biological role, catalyzes the interconversion of 2-phosphoglycerate and 3-phosphoglycerate. The polypeptide is 2,3-bisphosphoglycerate-dependent phosphoglycerate mutase (Burkholderia orbicola (strain MC0-3)).